A 69-amino-acid chain; its full sequence is Cecropin-like peptide 1 (69 aa).

The first 23 residues, 1 to 23 (MNFTKLFVVFAVVLVAFAGQSEA), serve as a signal peptide directing secretion. At Q68 the chain carries Glutamine amide.

In terms of tissue distribution, following bacterial infection, expressed in fat body, trachea and muscle.

Its subcellular location is the secreted. Antimicrobial peptide active against Gram-negative bacteria E.coli KCCM 11234 (MIC&lt;=1.03 uM), E.aerogenes KCCM 12177 (MIC&lt;=2.07 uM) and P.aeruginosa KCCM 11328 (MIC&lt;=2.07 uM). Not active against various Gram-positive bacteria at concentrations up to 4.14 uM. This is Cecropin-like peptide 1 from Hermetia illucens (Black soldier fly).